The sequence spans 232 residues: 5'-methylthioadenosine/S-adenosylhomocysteine nucleosidase (232 aa).

Glu-12 functions as the Proton acceptor in the catalytic mechanism. Substrate contacts are provided by residues Gly-78, Ile-152, and 173–174; that span reads ME. Asp-197 acts as the Proton donor in catalysis.

It belongs to the PNP/UDP phosphorylase family. MtnN subfamily. Homodimer.

The enzyme catalyses S-adenosyl-L-homocysteine + H2O = S-(5-deoxy-D-ribos-5-yl)-L-homocysteine + adenine. It carries out the reaction S-methyl-5'-thioadenosine + H2O = 5-(methylsulfanyl)-D-ribose + adenine. The catalysed reaction is 5'-deoxyadenosine + H2O = 5-deoxy-D-ribose + adenine. The protein operates within amino-acid biosynthesis; L-methionine biosynthesis via salvage pathway; S-methyl-5-thio-alpha-D-ribose 1-phosphate from S-methyl-5'-thioadenosine (hydrolase route): step 1/2. Its function is as follows. Catalyzes the irreversible cleavage of the glycosidic bond in both 5'-methylthioadenosine (MTA) and S-adenosylhomocysteine (SAH/AdoHcy) to adenine and the corresponding thioribose, 5'-methylthioribose and S-ribosylhomocysteine, respectively. Also cleaves 5'-deoxyadenosine, a toxic by-product of radical S-adenosylmethionine (SAM) enzymes, into 5-deoxyribose and adenine. Thus, is required for in vivo function of the radical SAM enzymes biotin synthase and lipoic acid synthase, that are inhibited by 5'-deoxyadenosine accumulation. The sequence is that of 5'-methylthioadenosine/S-adenosylhomocysteine nucleosidase from Salmonella arizonae (strain ATCC BAA-731 / CDC346-86 / RSK2980).